Here is a 444-residue protein sequence, read N- to C-terminus: Spermidine/putrescine import ATP-binding protein PotA (444 aa).

One can recognise an ABC transporter domain in the interval 11 to 332 (ISLVDVDKEF…PVNKWVANFI (322 aa)). Residue 43–50 (GPSGSGKT) coordinates ATP. The segment at 111–201 (RIKKKAEEIP…ESFKKKYLTR (91 aa)) is insert.

This sequence belongs to the ABC transporter superfamily. Spermidine/putrescine importer (TC 3.A.1.11.1) family. In terms of assembly, the complex is composed of two ATP-binding proteins (PotA), two transmembrane proteins (PotB and PotC) and a solute-binding protein (PotD).

The protein resides in the cell membrane. The enzyme catalyses ATP + H2O + polyamine-[polyamine-binding protein]Side 1 = ADP + phosphate + polyamineSide 2 + [polyamine-binding protein]Side 1.. In terms of biological role, part of the ABC transporter complex PotABCD involved in spermidine/putrescine import. Responsible for energy coupling to the transport system. The protein is Spermidine/putrescine import ATP-binding protein PotA of Mesomycoplasma hyopneumoniae (strain 232) (Mycoplasma hyopneumoniae).